Consider the following 93-residue polypeptide: uncharacterized protein (93 aa).

Residues 41–62 form a disordered region; it reads RSANRIPTTSSTSTSGTIPTTT. A compositionally biased stretch (low complexity) spans 46 to 62; the sequence is IPTTSSTSTSGTIPTTT.

This is an uncharacterized protein from Dictyostelium discoideum (Social amoeba).